Consider the following 185-residue polypeptide: Inner membrane-spanning protein YciB (185 aa).

A run of 5 helical transmembrane segments spans residues 27-47 (IVLV…YGIV), 53-73 (IMAS…EIRY), 76-96 (WKVT…QFQF), 118-138 (TLNL…IYIS), and 149-169 (FKSF…GVYI).

Belongs to the YciB family.

It is found in the cell inner membrane. Functionally, plays a role in cell envelope biogenesis, maintenance of cell envelope integrity and membrane homeostasis. The polypeptide is Inner membrane-spanning protein YciB (Haemophilus influenzae (strain 86-028NP)).